A 257-amino-acid polypeptide reads, in one-letter code: High-affinity copper transporter ctrC (257 aa).

The next 2 helical transmembrane spans lie at 79 to 99 (RGMF…LEFL) and 202 to 222 (YFNG…SFIF).

It belongs to the copper transporter (Ctr) (TC 1.A.56) family. SLC31A subfamily.

It is found in the cell membrane. The catalysed reaction is Cu(2+)(in) = Cu(2+)(out). Its function is as follows. High-affinity copper transporter of plasma membrane that mediates copper uptake under low copper conditions. The mechanism driving the transmembrane transport of copper has still to be determined. Acts as a potential virulence factor. This Aspergillus fumigatus (strain ATCC MYA-4609 / CBS 101355 / FGSC A1100 / Af293) (Neosartorya fumigata) protein is High-affinity copper transporter ctrC.